Reading from the N-terminus, the 100-residue chain is Small ribosomal subunit protein eS24 (100 aa).

This sequence belongs to the eukaryotic ribosomal protein eS24 family.

The protein is Small ribosomal subunit protein eS24 of Methanothermobacter thermautotrophicus (strain ATCC 29096 / DSM 1053 / JCM 10044 / NBRC 100330 / Delta H) (Methanobacterium thermoautotrophicum).